Here is a 314-residue protein sequence, read N- to C-terminus: Acetyl-coenzyme A carboxylase carboxyl transferase subunit beta, chloroplastic (314 aa).

Residues 47–314 (LWTRCDNCEN…APWKEKNNQV (268 aa)) form the CoA carboxyltransferase N-terminal domain. 4 residues coordinate Zn(2+): cysteine 51, cysteine 54, cysteine 70, and cysteine 73. Residues 51–73 (CDNCENMLYIKFLKQNKGVCEEC) form a C4-type zinc finger.

This sequence belongs to the AccD/PCCB family. In terms of assembly, acetyl-CoA carboxylase is a heterohexamer composed of biotin carboxyl carrier protein, biotin carboxylase and 2 subunits each of ACCase subunit alpha and ACCase plastid-coded subunit beta (accD). Zn(2+) serves as cofactor.

The protein localises to the plastid. The protein resides in the chloroplast stroma. It catalyses the reaction N(6)-carboxybiotinyl-L-lysyl-[protein] + acetyl-CoA = N(6)-biotinyl-L-lysyl-[protein] + malonyl-CoA. It functions in the pathway lipid metabolism; malonyl-CoA biosynthesis; malonyl-CoA from acetyl-CoA: step 1/1. Functionally, component of the acetyl coenzyme A carboxylase (ACC) complex. Biotin carboxylase (BC) catalyzes the carboxylation of biotin on its carrier protein (BCCP) and then the CO(2) group is transferred by the transcarboxylase to acetyl-CoA to form malonyl-CoA. This chain is Acetyl-coenzyme A carboxylase carboxyl transferase subunit beta, chloroplastic, found in Angiopteris lygodiifolia (Turnip fern).